The sequence spans 668 residues: Auxilin-like clathrin uncoating factor SWA2 (668 aa).

The segment at 1–95 (MSDPFAHLLT…ANNTPPSALA (95 aa)) is disordered. The tract at residues 1 to 100 (MSDPFAHLLT…PSALANTDDD (100 aa)) is CB1. Positions 17-36 (SASASKETTPQSSNSPSITG) are enriched in polar residues. A phosphoserine mark is found at S52 and S64. Positions 76–92 (PTNSTTKSNTANNTPPS) are enriched in low complexity. The UBA domain maps to 140 to 180 (DEVKDMEIARLMSLGLSIEEATEFYENDVTYERYLEILKSK). The tract at residues 238–302 (EANDRLNNYS…FETKIDITKR (65 aa)) is CB2. Phosphoserine is present on residues S264, S308, and S312. Disordered regions lie at residues 302–323 (RTAP…EENS) and 339–359 (EGNL…ENSN). Residues 303–362 (TAPDVSHSSSPTSGILIEENSRRNEPLIEDSLLDFSEGNLTNSKSNEDSTLFNENSNTDS) are CB3. The segment covering 340–359 (GNLTNSKSNEDSTLFNENSN) has biased composition (polar residues). 3 TPR repeats span residues 374–407 (YNEF…LPLN), 412–445 (IIAL…FPSS), and 467–500 (PKIM…NFFD). The disordered stretch occupies residues 511-556 (QDFINPPPVKKSMPVKKKTTTTSPATKKQNLTASSSNSPISVDSTS). Residues 539 to 555 (QNLTASSSNSPISVDST) show a composition bias toward polar residues. The J domain maps to 603–668 (CNWKDVSMQD…DKFKLQNDIN (66 aa)).

Interacts with the clathrin light and heavy chains CLC1 and CHC1, respectively. Binds to clathrin with its N-terminal domain containing 3 clathrin-binding (CB) motifs. Association with clathrin is transient. Binds to polyubiquitin and ubiquitinated proteins.

The protein localises to the cytoplasm. The protein resides in the endoplasmic reticulum membrane. Functionally, cofactor for the uncoating of clathrin-coated vesicles (CCVs) by Hsp70-type chaperones (SSA1/2/3 and SSB1/2). Coat disassembly is important for fusion of vesicles with target membranes and for recycling components of clathrin coats to the cytoplasm for further rounds of vesicle formation. Binds to assembled clathrin and recruits the ATP-activated chaperone to CCVs. Stimulates the ATPase activity of the clathrin-associated Hsp70-type chaperone SSA1, which then disrupts clathrin-clathrin interactions, leading to release of the clathrin coat. In addition, prevents unproductive clathrin assembly in the cell. Also required for cortical endoplasmic reticulum inheritance. The polypeptide is Auxilin-like clathrin uncoating factor SWA2 (SWA2) (Saccharomyces cerevisiae (strain ATCC 204508 / S288c) (Baker's yeast)).